Reading from the N-terminus, the 198-residue chain is Protein GrpE (198 aa).

Positions 1–18 are enriched in basic and acidic residues; that stretch reads MSEQEQKVEIPEVEKQEE. The interval 1 to 33 is disordered; the sequence is MSEQEQKVEIPEVEKQEEVVVEETQQAEHSQEF.

This sequence belongs to the GrpE family. As to quaternary structure, homodimer.

The protein resides in the cytoplasm. In terms of biological role, participates actively in the response to hyperosmotic and heat shock by preventing the aggregation of stress-denatured proteins, in association with DnaK and GrpE. It is the nucleotide exchange factor for DnaK and may function as a thermosensor. Unfolded proteins bind initially to DnaJ; upon interaction with the DnaJ-bound protein, DnaK hydrolyzes its bound ATP, resulting in the formation of a stable complex. GrpE releases ADP from DnaK; ATP binding to DnaK triggers the release of the substrate protein, thus completing the reaction cycle. Several rounds of ATP-dependent interactions between DnaJ, DnaK and GrpE are required for fully efficient folding. This chain is Protein GrpE, found in Haemophilus influenzae (strain ATCC 51907 / DSM 11121 / KW20 / Rd).